We begin with the raw amino-acid sequence, 178 residues long: Crossover junction endodeoxyribonuclease RuvC (178 aa).

Residues Asp11, Glu71, and Asp143 contribute to the active site. Residues Asp11, Glu71, and Asp143 each contribute to the Mg(2+) site.

It belongs to the RuvC family. As to quaternary structure, homodimer which binds Holliday junction (HJ) DNA. The HJ becomes 2-fold symmetrical on binding to RuvC with unstacked arms; it has a different conformation from HJ DNA in complex with RuvA. In the full resolvosome a probable DNA-RuvA(4)-RuvB(12)-RuvC(2) complex forms which resolves the HJ. It depends on Mg(2+) as a cofactor.

It is found in the cytoplasm. The catalysed reaction is Endonucleolytic cleavage at a junction such as a reciprocal single-stranded crossover between two homologous DNA duplexes (Holliday junction).. In terms of biological role, the RuvA-RuvB-RuvC complex processes Holliday junction (HJ) DNA during genetic recombination and DNA repair. Endonuclease that resolves HJ intermediates. Cleaves cruciform DNA by making single-stranded nicks across the HJ at symmetrical positions within the homologous arms, yielding a 5'-phosphate and a 3'-hydroxyl group; requires a central core of homology in the junction. The consensus cleavage sequence is 5'-(A/T)TT(C/G)-3'. Cleavage occurs on the 3'-side of the TT dinucleotide at the point of strand exchange. HJ branch migration catalyzed by RuvA-RuvB allows RuvC to scan DNA until it finds its consensus sequence, where it cleaves and resolves the cruciform DNA. The protein is Crossover junction endodeoxyribonuclease RuvC of Neisseria meningitidis serogroup B (strain ATCC BAA-335 / MC58).